Consider the following 338-residue polypeptide: Aspartate carbamoyltransferase catalytic subunit (338 aa).

Carbamoyl phosphate is bound by residues Arg59 and Thr60. Residue Lys87 participates in L-aspartate binding. Carbamoyl phosphate is bound by residues Arg109, His142, and Gln145. L-aspartate-binding residues include Arg182 and Arg253. 2 residues coordinate carbamoyl phosphate: Gly294 and Pro295.

The protein belongs to the aspartate/ornithine carbamoyltransferase superfamily. ATCase family. Heterododecamer (2C3:3R2) of six catalytic PyrB chains organized as two trimers (C3), and six regulatory PyrI chains organized as three dimers (R2).

It carries out the reaction carbamoyl phosphate + L-aspartate = N-carbamoyl-L-aspartate + phosphate + H(+). It participates in pyrimidine metabolism; UMP biosynthesis via de novo pathway; (S)-dihydroorotate from bicarbonate: step 2/3. Its function is as follows. Catalyzes the condensation of carbamoyl phosphate and aspartate to form carbamoyl aspartate and inorganic phosphate, the committed step in the de novo pyrimidine nucleotide biosynthesis pathway. The protein is Aspartate carbamoyltransferase catalytic subunit of Prochlorococcus marinus subsp. pastoris (strain CCMP1986 / NIES-2087 / MED4).